The following is a 109-amino-acid chain: Nucleoid-associated protein Spro_1136 (109 aa).

2 disordered regions span residues 1-21 and 90-109; these read MFGKGGLGNLMKQAQQMQEKM and EKMASVSNGMQLPPGFKMPF. Positions 11–21 are enriched in low complexity; that stretch reads MKQAQQMQEKM.

Belongs to the YbaB/EbfC family. In terms of assembly, homodimer.

The protein resides in the cytoplasm. Its subcellular location is the nucleoid. Its function is as follows. Binds to DNA and alters its conformation. May be involved in regulation of gene expression, nucleoid organization and DNA protection. In Serratia proteamaculans (strain 568), this protein is Nucleoid-associated protein Spro_1136.